A 406-amino-acid polypeptide reads, in one-letter code: S-adenosylmethionine synthase (406 aa).

H17 contacts ATP. D19 serves as a coordination point for Mg(2+). E45 is a K(+) binding site. E58 and Q101 together coordinate L-methionine. Positions 101-111 (QSAEINQGVAR) are flexible loop. ATP-binding positions include 178 to 180 (DGK), D258, 264 to 265 (RK), A281, and K285. L-methionine is bound at residue D258. K289 contributes to the L-methionine binding site.

It belongs to the AdoMet synthase family. Homotetramer; dimer of dimers. Requires Mg(2+) as cofactor. K(+) serves as cofactor.

It localises to the cytoplasm. It catalyses the reaction L-methionine + ATP + H2O = S-adenosyl-L-methionine + phosphate + diphosphate. The protein operates within amino-acid biosynthesis; S-adenosyl-L-methionine biosynthesis; S-adenosyl-L-methionine from L-methionine: step 1/1. Its function is as follows. Catalyzes the formation of S-adenosylmethionine (AdoMet) from methionine and ATP. The overall synthetic reaction is composed of two sequential steps, AdoMet formation and the subsequent tripolyphosphate hydrolysis which occurs prior to release of AdoMet from the enzyme. The sequence is that of S-adenosylmethionine synthase from Bifidobacterium longum subsp. infantis (strain ATCC 15697 / DSM 20088 / JCM 1222 / NCTC 11817 / S12).